Here is a 345-residue protein sequence, read N- to C-terminus: Anthranilate phosphoribosyltransferase (345 aa).

5-phospho-alpha-D-ribose 1-diphosphate-binding positions include Gly-86, 89–90, Thr-94, 96–99, 114–122, and Ser-126; these read GD, NIST, and KHGGRGVSS. Gly-86 provides a ligand contact to anthranilate. Ser-98 is a Mg(2+) binding site. Arg-172 contacts anthranilate. Mg(2+) is bound by residues Asp-231 and Glu-232.

This sequence belongs to the anthranilate phosphoribosyltransferase family. As to quaternary structure, homodimer. Mg(2+) is required as a cofactor.

The catalysed reaction is N-(5-phospho-beta-D-ribosyl)anthranilate + diphosphate = 5-phospho-alpha-D-ribose 1-diphosphate + anthranilate. Its pathway is amino-acid biosynthesis; L-tryptophan biosynthesis; L-tryptophan from chorismate: step 2/5. In terms of biological role, catalyzes the transfer of the phosphoribosyl group of 5-phosphorylribose-1-pyrophosphate (PRPP) to anthranilate to yield N-(5'-phosphoribosyl)-anthranilate (PRA). The sequence is that of Anthranilate phosphoribosyltransferase from Ralstonia pickettii (strain 12J).